The following is a 426-amino-acid chain: MVLLPEKPVWMSQQQYEEQYGSLLKLKESEKCNHEDKQLALQPKESSIGYSTQERIAKLSVPEVQDDDKNSKVRNRKHQRFDLEEKKKKLRLQKTIEEQIKHHDIEMTANRVVNVDHVVRQHYNERTFLSKKHNRNYSPIIKLRNFNNAIKYILIDKFTRAGDVVLELACGKGGDLRKYGAAGISQFIGIDISNASITEALKRYHSMKNLEYQVILITGDCFGESLGVAVESFPECRFPCDIVSCQFALHYAFETEEKARRMLLNVVKSLKIGGYFFGTIPDSEFIRYKMNKIPESVEKPSWGNSIYKVTFSNNEYQKNGNEFPSPFGQMYTFWLEDAIDNVPEYVIPFESFRSLADEYGMELELQKGFNEFFVEEIPNWVNRFSPKMREGLKRSDGRYGVEGVEKEPAAYFYTTFAFRKVRDYQE.

The region spanning 138–421 is the mRNA cap 0 methyltransferase domain; sequence SPIIKLRNFN…FYTTFAFRKV (284 aa). 147–148 serves as a coordination point for mRNA; that stretch reads NN. 6 residues coordinate S-adenosyl-L-methionine: K151, A169, D191, D220, Q246, and Y251.

This sequence belongs to the class I-like SAM-binding methyltransferase superfamily. mRNA cap 0 methyltransferase family.

It localises to the nucleus. It catalyses the reaction a 5'-end (5'-triphosphoguanosine)-ribonucleoside in mRNA + S-adenosyl-L-methionine = a 5'-end (N(7)-methyl 5'-triphosphoguanosine)-ribonucleoside in mRNA + S-adenosyl-L-homocysteine. In terms of biological role, responsible for methylating the 5'-cap structure of mRNAs. The polypeptide is mRNA cap guanine-N(7) methyltransferase (ABD1) (Kluyveromyces lactis (strain ATCC 8585 / CBS 2359 / DSM 70799 / NBRC 1267 / NRRL Y-1140 / WM37) (Yeast)).